We begin with the raw amino-acid sequence, 576 residues long: Urease subunit alpha (576 aa).

The Urease domain maps to 132 to 576; the sequence is GGVDTHIHFI…LPMAQRYFLF (445 aa). Residues His137, His139, and Lys220 each contribute to the Ni(2+) site. Lys220 is modified (N6-carboxylysine). His222 is a substrate binding site. 2 residues coordinate Ni(2+): His249 and His275. The active-site Proton donor is the His323. A Ni(2+)-binding site is contributed by Asp363.

The protein belongs to the metallo-dependent hydrolases superfamily. Urease alpha subunit family. As to quaternary structure, heterotrimer of UreA (gamma), UreB (beta) and UreC (alpha) subunits. Three heterotrimers associate to form the active enzyme. Requires Ni cation as cofactor. Post-translationally, carboxylation allows a single lysine to coordinate two nickel ions.

It is found in the cytoplasm. It carries out the reaction urea + 2 H2O + H(+) = hydrogencarbonate + 2 NH4(+). The protein operates within nitrogen metabolism; urea degradation; CO(2) and NH(3) from urea (urease route): step 1/1. The protein is Urease subunit alpha of Arthrobacter sp. (strain FB24).